The following is a 298-amino-acid chain: Putative olfactory receptor 10D4 (298 aa).

The Extracellular portion of the chain corresponds to 1–23 (MRNHTMVTEFILLGIPETEGLET). N-linked (GlcNAc...) asparagine glycosylation occurs at N3. A helical membrane pass occupies residues 24 to 44 (ALLFLFSSFYLCTLLGNVLIL). The Cytoplasmic segment spans residues 45–52 (TAIISSTR). The helical transmembrane segment at 53–73 (LHTPMYFFLGNLSIFDLGFSS) threads the bilayer. The Extracellular segment spans residues 74–97 (TTVPKMLFYLSGNSHAISYAGCVS). C95 and C187 form a disulfide bridge. A helical transmembrane segment spans residues 98-118 (QLFFYHFLGCTECFLYTVMAC). The Cytoplasmic segment spans residues 119 to 137 (DRFVAICFPLRYTVIMNHR). Residues 138–158 (VCFMLATGTWMIGCVHAMILT) traverse the membrane as a helical segment. The Extracellular portion of the chain corresponds to 159-195 (PLTFQLPYCGPNKVGYYFCDIPAVLPLACKDTSLAQR). Residues 196 to 215 (VGFTNVGLLSLICFFLILVS) traverse the membrane as a helical segment. Residues 216–235 (YTCIGISISKIRSAEGRQRA) are Cytoplasmic-facing. A helical membrane pass occupies residues 236 to 256 (FSTCSAHLTAILCAYGPVIVI). Residues 257–267 (YLQPNPSALLG) lie on the Extracellular side of the membrane. Residues 268-288 (SIIQILNNLVTPMLNPLIYSL) form a helical membrane-spanning segment. Over 289 to 298 (RNKDVKSDQP) the chain is Cytoplasmic.

It belongs to the G-protein coupled receptor 1 family.

Its subcellular location is the cell membrane. Its function is as follows. Odorant receptor. In Homo sapiens (Human), this protein is Putative olfactory receptor 10D4 (OR10D4P).